A 157-amino-acid chain; its full sequence is Peptide methionine sulfoxide reductase MsrA (157 aa).

Cys-10 is an active-site residue.

The protein belongs to the MsrA Met sulfoxide reductase family.

It carries out the reaction L-methionyl-[protein] + [thioredoxin]-disulfide + H2O = L-methionyl-(S)-S-oxide-[protein] + [thioredoxin]-dithiol. The catalysed reaction is [thioredoxin]-disulfide + L-methionine + H2O = L-methionine (S)-S-oxide + [thioredoxin]-dithiol. Has an important function as a repair enzyme for proteins that have been inactivated by oxidation. Catalyzes the reversible oxidation-reduction of methionine sulfoxide in proteins to methionine. This Clostridium botulinum (strain Hall / ATCC 3502 / NCTC 13319 / Type A) protein is Peptide methionine sulfoxide reductase MsrA.